An 838-amino-acid polypeptide reads, in one-letter code: P protein (838 aa).

At 1–179 (MHLEGRDGRR…KLRRCVQWLK (179 aa)) the chain is on the cytoplasmic side. Disordered stretches follow at residues 38–60 (LPRG…GQSS) and 74–94 (KGRS…DSCF). Polar residues predominate over residues 78-87 (HSSLPQMSSS). A helical transmembrane segment spans residues 180 to 197 (VMGLFAFVVLCSILFSLY). Residues 198–330 (PDQGKLWQLL…QYLRGSVETQ (133 aa)) are Extracellular-facing. 3 N-linked (GlcNAc...) asparagine glycosylation sites follow: N214, N218, and N273. A helical membrane pass occupies residues 331-347 (VTIATAILAGVYALIIF). The Cytoplasmic segment spans residues 348–353 (EIVHRT). Residues 354–370 (LAAMLGSLAALAALAVI) traverse the membrane as a helical segment. Residues 371–384 (GDRPSLTHVVEWID) lie on the Extracellular side of the membrane. A helical membrane pass occupies residues 385-401 (FETLALLFGMMILVAIF). Topologically, residues 402-423 (SETGFFDYCAVKAYRLSRGRVW) are cytoplasmic. Residues 424-440 (AMIIMLCLIAAVLSAFL) form a helical membrane-spanning segment. The Extracellular portion of the chain corresponds to 441–513 (DNVTTMLLFT…DFAGFTAHMF (73 aa)). N442 is a glycosylation site (N-linked (GlcNAc...) asparagine). A helical membrane pass occupies residues 514 to 530 (IGICLVLLVCFPLLRLL). Residues 531-620 (YWNRKLYNKE…LQKKHRISDG (90 aa)) lie on the Cytoplasmic side of the membrane. Residues 621–637 (ILLAKCLTVLGFVIFMF) traverse the membrane as a helical segment. Residues 638–647 (FLNSFVPGIH) lie on the Extracellular side of the membrane. The helical transmembrane segment at 648–664 (LDLGWIAILGAIWLLIL) threads the bilayer. The Cytoplasmic segment spans residues 665 to 679 (ADIHDFEIILHRVEW). The helical transmembrane segment at 680–696 (ATLLFFAALFVLMEALA) threads the bilayer. Topologically, residues 697-720 (HLHLIEYVGEQTALLIKMVPEEQR) are extracellular. The chain crosses the membrane as a helical span at residues 721–737 (LIAAIVLVVWVSALASS). Residues 738-760 (LIDNIPFTATMIPVLLNLSHDPE) are Cytoplasmic-facing. Residues 761–777 (VGLPAPPLMYALAFGAC) traverse the membrane as a helical segment. Over 778–817 (LGGNGTLIGASANVVCAGIAEQHGYGFSFMEFFRLGFPMM) the chain is Extracellular. N781 carries an N-linked (GlcNAc...) asparagine glycan. The helical transmembrane segment at 818–834 (VVSCTVGMCYLLVAHVV) threads the bilayer. The Cytoplasmic segment spans residues 835-838 (VGWN).

This sequence belongs to the CitM (TC 2.A.11) transporter family. As to expression, expressed in melanocytes and retinal pigment epithelium.

It is found in the melanosome membrane. It carries out the reaction chloride(in) = chloride(out). Functionally, contributes to a melanosome-specific anion (chloride) current that modulates melanosomal pH for optimal tyrosinase activity required for melanogenesis and the melanosome maturation. One of the components of the mammalian pigmentary system. May serve as a key control point at which ethnic skin color variation is determined. Major determinant of brown and/or blue eye color. Seems to regulate the post-translational processing of tyrosinase, which catalyzes the limiting reaction in melanin synthesis. This Homo sapiens (Human) protein is P protein.